The sequence spans 471 residues: Eremophilane O-acetyltransferase ORF8 (471 aa).

The protein belongs to the fumigaclavine B O-acetyltransferase family. As to quaternary structure, monomer.

It participates in sesquiterpene biosynthesis. Functionally, O-acetyltransferase; part of the gene cluster that mediates the biosynthesis of PR-toxin, a bicyclic sesquiterpene belonging to the eremophilane class and acting as a mycotoxin. The first step of the pathway is catalyzed by the aristolochene synthase which performs the cyclization of trans,trans-farnesyl diphosphate (FPP) to the bicyclic sesquiterpene aristolochene. Following the formation of aristolochene, the non-oxygenated aristolochene is converted to the trioxygenated intermediate eremofortin B, via 7-epi-neopetasone. This conversion appears to involve three enzymes, a hydroxysterol oxidase-like enzyme, the quinone-oxidase prx3 that forms the quinone-type-structure in the bicyclic nucleus of aristolochene with the C8-oxo group and the C-3 hydroxyl group, and the P450 monooxygenase ORF6 that introduces the epoxide at the double bond between carbons 1 and 2. No monoxy or dioxy-intermediates have been reported to be released to the broth, so these three early oxidative reactions may be coupled together. Eremofortin B is further oxidized by another P450 monooxygenase, that introduces a second epoxide between carbons 7 and 11 prior to acetylation to eremofortin A by the acetyltransferase ORF8. The second epoxidation may be performed by a second P450 monooxygenase. After the acetylation step, eremofortin A is converted to eremofortin C and then to PR-toxin. First the conversion of eremofortin A to eremofortin C proceeds by oxidation of the side chain of the molecule at C-12 and is catalyzed by the short-chain oxidoreductase prx1. The cytochrome P450 monooxygenase ORF6 is probably also involved in this step. The primary alcohol formed at C-12 is finally oxidized by the short-chain alcohol dehydrogenase prx4 that forms PR-toxin. The polypeptide is Eremophilane O-acetyltransferase ORF8 (Penicillium roqueforti (strain FM164)).